Consider the following 311-residue polypeptide: Nod factor export ATP-binding protein I (311 aa).

The ABC transporter domain maps to Ile13–Tyr243. Position 45–52 (Gly45–Ser52) interacts with ATP.

This sequence belongs to the ABC transporter superfamily. Lipooligosaccharide exporter (TC 3.A.1.102) family. In terms of assembly, the complex is composed of two ATP-binding proteins (NodI) and two transmembrane proteins (NodJ).

It localises to the cell inner membrane. Its function is as follows. Part of the ABC transporter complex NodIJ involved in the export of the nodulation factors (Nod factors), the bacterial signal molecules that induce symbiosis and subsequent nodulation induction. Nod factors are LCO (lipo-chitin oligosaccharide), a modified beta-1,4-linked N-acetylglucosamine oligosaccharide. This subunit is responsible for energy coupling to the transport system. This chain is Nod factor export ATP-binding protein I, found in Rhizobium leguminosarum bv. viciae.